The chain runs to 159 residues: Transcription elongation factor GreA (159 aa).

Residues 44–75 (SENAEYDAAREQQSQTEARIADLENKLSTATI) are a coiled coil.

It belongs to the GreA/GreB family.

Its function is as follows. Necessary for efficient RNA polymerase transcription elongation past template-encoded arresting sites. The arresting sites in DNA have the property of trapping a certain fraction of elongating RNA polymerases that pass through, resulting in locked ternary complexes. Cleavage of the nascent transcript by cleavage factors such as GreA or GreB allows the resumption of elongation from the new 3'terminus. GreA releases sequences of 2 to 3 nucleotides. This Chlorobium limicola (strain DSM 245 / NBRC 103803 / 6330) protein is Transcription elongation factor GreA.